We begin with the raw amino-acid sequence, 218 residues long: Elongation factor Ts (218 aa).

The tract at residues 82-85 (TDFV) is involved in Mg(2+) ion dislocation from EF-Tu.

Belongs to the EF-Ts family.

It is found in the cytoplasm. Associates with the EF-Tu.GDP complex and induces the exchange of GDP to GTP. It remains bound to the aminoacyl-tRNA.EF-Tu.GTP complex up to the GTP hydrolysis stage on the ribosome. In Prochlorococcus marinus (strain MIT 9313), this protein is Elongation factor Ts.